The sequence spans 437 residues: GTPase Der (437 aa).

EngA-type G domains follow at residues 3 to 168 (PLIA…PVQE) and 178 to 353 (TNLA…ENRS). GTP contacts are provided by residues 9-16 (GRPNVGKS), 56-60 (DTGGY), 120-123 (NKVE), 184-191 (GRPNVGKS), 231-235 (DTAGL), and 296-299 (NKWD). In terms of domain architecture, KH-like spans 354–437 (RKITTSALNR…VTVSLRFFKK (84 aa)).

This sequence belongs to the TRAFAC class TrmE-Era-EngA-EngB-Septin-like GTPase superfamily. EngA (Der) GTPase family. In terms of assembly, associates with the 50S ribosomal subunit.

In terms of biological role, GTPase that plays an essential role in the late steps of ribosome biogenesis. The sequence is that of GTPase Der from Chlorobium phaeobacteroides (strain DSM 266 / SMG 266 / 2430).